The sequence spans 277 residues: Large ribosomal subunit protein uL2c (277 aa).

The interval 30–60 is disordered; that stretch reads RKKLTSGQHSGKGRNNRGIITSRHRGGGHKR. Basic residues predominate over residues 51 to 60; the sequence is SRHRGGGHKR.

The protein belongs to the universal ribosomal protein uL2 family. As to quaternary structure, part of the 50S ribosomal subunit.

Its subcellular location is the plastid. The protein resides in the chloroplast. In Angiopteris evecta (Mule's foot fern), this protein is Large ribosomal subunit protein uL2c (rpl2).